We begin with the raw amino-acid sequence, 70 residues long: DNA-directed RNA polymerase subunit epsilon (70 aa).

The protein belongs to the RNA polymerase subunit epsilon family. In terms of assembly, RNAP is composed of a core of 2 alpha, a beta and a beta' subunit. The core is associated with a delta subunit, and at least one of epsilon or omega. When a sigma factor is associated with the core the holoenzyme is formed, which can initiate transcription.

The enzyme catalyses RNA(n) + a ribonucleoside 5'-triphosphate = RNA(n+1) + diphosphate. Functionally, a non-essential component of RNA polymerase (RNAP). The polypeptide is DNA-directed RNA polymerase subunit epsilon (Bacillus cereus (strain ZK / E33L)).